The following is a 172-amino-acid chain: Large ribosomal subunit protein uL10 (172 aa).

The protein belongs to the universal ribosomal protein uL10 family. Part of the ribosomal stalk of the 50S ribosomal subunit. The N-terminus interacts with L11 and the large rRNA to form the base of the stalk. The C-terminus forms an elongated spine to which L12 dimers bind in a sequential fashion forming a multimeric L10(L12)X complex.

In terms of biological role, forms part of the ribosomal stalk, playing a central role in the interaction of the ribosome with GTP-bound translation factors. This chain is Large ribosomal subunit protein uL10, found in Xanthobacter autotrophicus (strain ATCC BAA-1158 / Py2).